The following is a 135-amino-acid chain: Large ribosomal subunit protein bL19 (135 aa).

It belongs to the bacterial ribosomal protein bL19 family.

In terms of biological role, this protein is located at the 30S-50S ribosomal subunit interface and may play a role in the structure and function of the aminoacyl-tRNA binding site. The protein is Large ribosomal subunit protein bL19 of Xanthomonas campestris pv. campestris (strain 8004).